The chain runs to 1183 residues: Probable RNA-dependent RNA polymerase 4 (1183 aa).

The protein belongs to the RdRP family. As to expression, expressed in shoot apical meristem (SAM) and panicles.

The catalysed reaction is RNA(n) + a ribonucleoside 5'-triphosphate = RNA(n+1) + diphosphate. Functionally, probably involved in the RNA silencing pathway and required for the generation of small interfering RNAs (siRNAs). This chain is Probable RNA-dependent RNA polymerase 4 (RDR4), found in Oryza sativa subsp. japonica (Rice).